The sequence spans 1241 residues: ATP-dependent helicase/nuclease subunit A (1241 aa).

In terms of domain architecture, UvrD-like helicase ATP-binding spans 12 to 485 (SQWTDDQWKA…IDLAKNFRSR (474 aa)). 33–40 (AAAGSGKT) contacts ATP. In terms of domain architecture, UvrD-like helicase C-terminal spans 505-805 (GEIDYDADAE…RIMTIHKSKG (301 aa)).

The protein belongs to the helicase family. AddA subfamily. Heterodimer of AddA and AddB/RexB. Requires Mg(2+) as cofactor.

The enzyme catalyses Couples ATP hydrolysis with the unwinding of duplex DNA by translocating in the 3'-5' direction.. The catalysed reaction is ATP + H2O = ADP + phosphate + H(+). In terms of biological role, the heterodimer acts as both an ATP-dependent DNA helicase and an ATP-dependent, dual-direction single-stranded exonuclease. Recognizes the chi site generating a DNA molecule suitable for the initiation of homologous recombination. The AddA nuclease domain is required for chi fragment generation; this subunit has the helicase and 3' -&gt; 5' nuclease activities. The chain is ATP-dependent helicase/nuclease subunit A from Bacillus anthracis.